The following is a 1374-amino-acid chain: DNA-directed RNA polymerase subunit beta' (1374 aa).

The interval 1-47 is disordered; it reads MTSTSPKSRKPSTKTTKSKSKSKSKSKAAKAAAAGASPALARTPPQF. Basic residues predominate over residues 7 to 28; sequence KSRKPSTKTTKSKSKSKSKSKA. Over residues 29–39 the composition is skewed to low complexity; it reads AKAAAAGASPA. Residues C258, C325, C332, and C335 each contribute to the Zn(2+) site. The segment at 1344-1374 is disordered; sequence RPTGENELEEEQLPDPSALEGLQQEGLLTEE. Low complexity predominate over residues 1362-1374; it reads LEGLQQEGLLTEE.

This sequence belongs to the RNA polymerase beta' chain family. RpoC2 subfamily. As to quaternary structure, in cyanobacteria the RNAP catalytic core is composed of 2 alpha, 1 beta, 1 beta', 1 gamma and 1 omega subunit. When a sigma factor is associated with the core the holoenzyme is formed, which can initiate transcription. Zn(2+) serves as cofactor.

The enzyme catalyses RNA(n) + a ribonucleoside 5'-triphosphate = RNA(n+1) + diphosphate. Functionally, DNA-dependent RNA polymerase catalyzes the transcription of DNA into RNA using the four ribonucleoside triphosphates as substrates. This Prochlorococcus marinus (strain MIT 9313) protein is DNA-directed RNA polymerase subunit beta'.